A 380-amino-acid chain; its full sequence is E3 ubiquitin-protein ligase Iruka (380 aa).

Residues 50 to 92 (APEMDSSTAGASGSARSGSSGSGSSGSHDTLSRGSSSSGSQVN) are disordered. 2 stretches are compositionally biased toward low complexity: residues 55–68 (SSTAGASGSARSGS) and 74–89 (SGSHDTLSRGSSSSGS). The RING-type; atypical zinc-finger motif lies at 253-294 (CSICWDDFKIDETVRKLPCSHLYHENCIVPWLNLHSTCPICR). Residues 317–367 (EMAADGSNSERRSASTATGTDNPSPANNPSQAAAEGGRTRPDANPAQAARN) are disordered. Residues 338-350 (NPSPANNPSQAAA) are compositionally biased toward low complexity.

As to quaternary structure, interacts (via N-terminus) with CG7546 (via Ubl domain).

The enzyme catalyses S-ubiquitinyl-[E2 ubiquitin-conjugating enzyme]-L-cysteine + [acceptor protein]-L-lysine = [E2 ubiquitin-conjugating enzyme]-L-cysteine + N(6)-ubiquitinyl-[acceptor protein]-L-lysine.. It participates in protein modification; protein ubiquitination. Functionally, E3 ubiquitin-protein ligase that mediates E2-dependent, 'Lys-48'- and/or 'Lys-63'-linked polyubiquitination of substrates. Recognizes miRNA-empty Ago1 and triggers its degradation via polyubiquitination independently of the Bag6 complex. By targeting miRNA-empty Ago1, eliminates dysfunctional Ago1 not able to bind miRNA and thereby plays a role in the quality control of miRNA-mediated silencing. The sequence is that of E3 ubiquitin-protein ligase Iruka from Drosophila melanogaster (Fruit fly).